The primary structure comprises 26 residues: Thioredoxin H-type (26 aa).

Belongs to the thioredoxin family. Plant H-type subfamily.

It is found in the cytoplasm. In terms of biological role, participates in various redox reactions through the reversible oxidation of the active center dithiol to a disulfide. The H form is known to activate a number of cytosolic enzymes. The sequence is that of Thioredoxin H-type from Populus euphratica (Euphrates poplar).